Consider the following 194-residue polypeptide: Putative NAD(P)H nitroreductase YfhC (194 aa).

FMN contacts are provided by residues 20-22 (RRS), 147-148 (KI), and R188.

It belongs to the nitroreductase family. Requires FMN as cofactor.

The sequence is that of Putative NAD(P)H nitroreductase YfhC (yfhC) from Bacillus subtilis (strain 168).